The primary structure comprises 528 residues: Tyrosine--tRNA ligase, cytoplasmic (528 aa).

Met-1 is modified (N-acetylmethionine). Gly-2 carries the post-translational modification N-acetylglycine; in Tyrosine--tRNA ligase, cytoplasmic, N-terminally processed. Tyr-39 contributes to the L-tyrosine binding site. Tyr-39 contacts trans-resveratrol. Positions 44 to 52 (TTGKPHVAY) match the 'HIGH' region motif. L-tyrosine is bound by residues Tyr-166, Gln-170, Asp-173, and Gln-188. 2 residues coordinate trans-resveratrol: Gln-170 and Asp-173. An N6-acetyllysine modification is found at Lys-197. Residue Ser-205 is modified to Phosphoserine. Lys-206 bears the N6-acetyllysine mark. The 'KMSKS' region motif lies at 222 to 226 (KMSSS). Positions 242-247 (KKKLKK) match the Nuclear localization signal motif. Residues 339–363 (AAYPDPSKQKPTAKGPAKSSEPEEI) form a disordered region. The 105-residue stretch at 364-468 (IPSRLDIRVG…AGSAPGERVF (105 aa)) folds into the tRNA-binding domain. Ser-386 bears the Phosphoserine mark. An N6-acetyllysine mark is found at Lys-474, Lys-482, and Lys-490.

The protein belongs to the class-I aminoacyl-tRNA synthetase family. As to quaternary structure, homodimer. Interacts (when binding to resveratrol) with PARP1; interaction stimulates the poly-ADP-ribosyltransferase activity of PARP1.

It localises to the cytoplasm. The protein localises to the nucleus. The catalysed reaction is tRNA(Tyr) + L-tyrosine + ATP = L-tyrosyl-tRNA(Tyr) + AMP + diphosphate + H(+). Resveratrol strongly inhibits the tyrosine--tRNA ligase activity. In terms of biological role, tyrosine--tRNA ligase that catalyzes the attachment of tyrosine to tRNA(Tyr) in a two-step reaction: tyrosine is first activated by ATP to form Tyr-AMP and then transferred to the acceptor end of tRNA(Tyr). Also acts as a positive regulator of poly-ADP-ribosylation in the nucleus, independently of its tyrosine--tRNA ligase activity. Activity is switched upon resveratrol-binding: resveratrol strongly inhibits the tyrosine--tRNA ligase activity and promotes relocalization to the nucleus, where YARS1 specifically stimulates the poly-ADP-ribosyltransferase activity of PARP1. The protein is Tyrosine--tRNA ligase, cytoplasmic (Yars1) of Rattus norvegicus (Rat).